The primary structure comprises 215 residues: Probable transaldolase (215 aa).

The Schiff-base intermediate with substrate role is filled by Lys83.

The protein belongs to the transaldolase family. Type 3B subfamily.

Its subcellular location is the cytoplasm. It catalyses the reaction D-sedoheptulose 7-phosphate + D-glyceraldehyde 3-phosphate = D-erythrose 4-phosphate + beta-D-fructose 6-phosphate. It functions in the pathway carbohydrate degradation; pentose phosphate pathway; D-glyceraldehyde 3-phosphate and beta-D-fructose 6-phosphate from D-ribose 5-phosphate and D-xylulose 5-phosphate (non-oxidative stage): step 2/3. In terms of biological role, transaldolase is important for the balance of metabolites in the pentose-phosphate pathway. This is Probable transaldolase from Heliobacterium modesticaldum (strain ATCC 51547 / Ice1).